A 177-amino-acid chain; its full sequence is Thymidine kinase (177 aa).

An ATP-binding site is contributed by 11–18 (GPMFSGKS). Glu83 (proton acceptor) is an active-site residue. Phe113 contacts substrate. Zn(2+) is bound by residues Cys138 and Cys141. 157–161 (IEIIG) serves as a coordination point for substrate. Positions 170 and 173 each coordinate Zn(2+).

The protein belongs to the thymidine kinase family. Homotetramer. Two molecules of substrate bind to each enzyme tetramer.

The catalysed reaction is thymidine + ATP = dTMP + ADP + H(+). Phosphorylates thymidine and thymidine analogs, such as azidothymidine (AZT). Part of the salvage pathway for pyrimidine deoxyribonucleotide synthesis. The polypeptide is Thymidine kinase (OPG101) (Vaccinia virus (strain Copenhagen) (VACV)).